The chain runs to 457 residues: MDKLNKITVPASQKLRQLQKMVHDIKNNEGGIMDKIKKLKVKGPPSVPRRDYALDNPADEEEQWSDDFDSDYENPDEHSDSEMYVMPAEETGDDSYEPPPAEQQTRVVHPALPFTRGEYVDNRSSQRHSPPFSKTLPSKPSWPSAKARLASTLPAPNSLQKPQVPPKPKDLLEDEADYVVPVEDNDENYIHPRESSPLPAEKAPTVNRSTKPNSSSKHVSPPGTVAGRNSGVWDSKSSLPAAPSPLPRAGKKTATPLKTTPVPSLQNASNVCEEKPVPAERHRGSSHRQDTVQSPVFPPTQKPVLQKPVPLPRFTEGGSPAADGPVPSFPFNSTFADQEAELHGKPWYAGACDRKSAEEALHRSNKDGSFLIRKSSGHDSKQPYTLVAFFNKRVYNIPVRFIEATKQYALGKKKNGEEYFGSVVEIIKNHQHNPLVLIDSQNNTKDSTRLKYAVKVS.

A disordered region spans residues 38-306 (KLKVKGPPSV…FPPTQKPVLQ (269 aa)). A compositionally biased stretch (acidic residues) spans 57-74 (PADEEEQWSDDFDSDYEN). 5 positions are modified to phosphotyrosine; by SYK: tyrosine 72, tyrosine 84, tyrosine 96, tyrosine 178, and tyrosine 189. A compositionally biased stretch (acidic residues) spans 172–187 (LEDEADYVVPVEDNDE). Polar residues-rich tracts occupy residues 206–218 (VNRS…SSKH) and 256–270 (PLKT…NASN). Positions 272 to 290 (CEEKPVPAERHRGSSHRQD) are enriched in basic and acidic residues. The region spanning 347 to 454 (WYAGACDRKS…KDSTRLKYAV (108 aa)) is the SH2 domain.

In terms of assembly, associates with PLCG1, VAV1 and NCK1 in a B-cell antigen receptor-dependent fashion. Interacts with VAV3, PLCG2 and GRB2. Interacts through its SH2 domain with CD79A. Interacts (via SH2 domain) with SYK; phosphorylated and activated by SYK. Interacts (via SH2 domain) with SCIMP; this interaction is dependent on phosphorylation of SCIMP 'Tyr-120'. Following BCR activation, phosphorylated on tyrosine residues by SYK and LYN. When phosphorylated, serves as a scaffold to assemble downstream targets of antigen activation, including PLCG1, VAV1, GRB2 and NCK1. Phosphorylation of Tyr-84, Tyr-178 and Tyr-189 facilitates PLCG1 binding. Phosphorylation of Tyr-96 facilitates BTK binding. Phosphorylation of Tyr-72 facilitates VAV1 and NCK1 binding. Phosphorylation is required for both Ca(2+) and MAPK signaling pathways.

It localises to the cytoplasm. The protein localises to the cell membrane. Functionally, functions as a central linker protein, downstream of the B-cell receptor (BCR), bridging the SYK kinase to a multitude of signaling pathways and regulating biological outcomes of B-cell function and development. Plays a role in the activation of ERK/EPHB2, MAP kinase p38 and JNK. Modulates AP1 activation. Important for the activation of NF-kappa-B and NFAT. Plays an important role in BCR-mediated PLCG1 and PLCG2 activation and Ca(2+) mobilization and is required for trafficking of the BCR to late endosomes. However, does not seem to be required for pre-BCR-mediated activation of MAP kinase and phosphatidyl-inositol 3 (PI3) kinase signaling. May be required for the RAC1-JNK pathway. Plays a critical role in orchestrating the pro-B cell to pre-B cell transition. May play an important role in BCR-induced B-cell apoptosis. The protein is B-cell linker protein (Blnk) of Rattus norvegicus (Rat).